The sequence spans 299 residues: Non-structural protein V (299 aa).

Disordered stretches follow at residues 30 to 101 (QEVS…EEDT) and 128 to 163 (SLMV…SEGN). Residues 79–99 (EDQRGREDNTAPVEAKDRIEE) are compositionally biased toward basic and acidic residues. The span at 148-160 (LDDSIEDSSEDYS) shows a compositional bias: acidic residues. Zn(2+)-binding residues include His232, Cys251, Cys255, Cys267, Cys269, Cys272, Cys276, and Cys279.

Its function is as follows. Blocks host interferon signaling. The polypeptide is Non-structural protein V (P/V) (Phocidae (true seals)).